The primary structure comprises 362 residues: MQSPTAQGTNDGVRPARTWPSVLGTLTDGRDLSVDEAKWAMDEIMSDNATSAQIAAFGVALKMKGETPEELRGLADSMLGHARKVPVDDDVVDIVGTGGDRSNTVNISTMASLVVAASGIRVVKHGNRAASSKSGGADVLEALGVKINLGPDEVARCVREVGIGFCFAPVFHPALRFAGAPRKEIGIPTVFNVLGPLTNPARPRAGLIGCAFPGLISVVAGVLAQRGNSALVVRGDDGLDELTTSTTSTVHIVADGAVTTRQLDPRDIGIARVSLDELRGGDAEVNAAVARRLFAGETGPVRDAVLLNAAAAIAAFRGLGGRTLEDALSDGLSTAAQSIDSGAAATLLARWAELTSGLATSK.

5-phospho-alpha-D-ribose 1-diphosphate is bound by residues glycine 96, 99-100 (GD), threonine 104, 106-109 (NIST), 124-132 (KHGNRAASS), and glycine 136. Glycine 96 is an anthranilate binding site. Mg(2+) is bound at residue serine 108. Position 127 (asparagine 127) interacts with anthranilate. Arginine 182 provides a ligand contact to anthranilate. The Mg(2+) site is built by aspartate 240 and glutamate 241.

This sequence belongs to the anthranilate phosphoribosyltransferase family. As to quaternary structure, homodimer. Requires Mg(2+) as cofactor.

It catalyses the reaction N-(5-phospho-beta-D-ribosyl)anthranilate + diphosphate = 5-phospho-alpha-D-ribose 1-diphosphate + anthranilate. It functions in the pathway amino-acid biosynthesis; L-tryptophan biosynthesis; L-tryptophan from chorismate: step 2/5. Its function is as follows. Catalyzes the transfer of the phosphoribosyl group of 5-phosphorylribose-1-pyrophosphate (PRPP) to anthranilate to yield N-(5'-phosphoribosyl)-anthranilate (PRA). The sequence is that of Anthranilate phosphoribosyltransferase from Rhodococcus jostii (strain RHA1).